Reading from the N-terminus, the 121-residue chain is uncharacterized protein (121 aa).

This is an uncharacterized protein from Methanocaldococcus jannaschii (strain ATCC 43067 / DSM 2661 / JAL-1 / JCM 10045 / NBRC 100440) (Methanococcus jannaschii).